A 342-amino-acid chain; its full sequence is tRNA N6-adenosine threonylcarbamoyltransferase (342 aa).

Fe cation is bound by residues His114 and His118. Residues 136–140 (LVSGG), Asp169, Gly182, Asp186, and Asn275 contribute to the substrate site. Asp301 is a Fe cation binding site.

It belongs to the KAE1 / TsaD family. Fe(2+) is required as a cofactor.

It localises to the cytoplasm. It carries out the reaction L-threonylcarbamoyladenylate + adenosine(37) in tRNA = N(6)-L-threonylcarbamoyladenosine(37) in tRNA + AMP + H(+). Its function is as follows. Required for the formation of a threonylcarbamoyl group on adenosine at position 37 (t(6)A37) in tRNAs that read codons beginning with adenine. Is involved in the transfer of the threonylcarbamoyl moiety of threonylcarbamoyl-AMP (TC-AMP) to the N6 group of A37, together with TsaE and TsaB. TsaD likely plays a direct catalytic role in this reaction. The protein is tRNA N6-adenosine threonylcarbamoyltransferase of Streptococcus pyogenes serotype M3 (strain ATCC BAA-595 / MGAS315).